Reading from the N-terminus, the 141-residue chain is MLASCHITSLSGILLLLCVQCSAQILINPCGDVPGVRGPCSANLRRFTFAYGRCVPFYYGGCLGTRNRFDSFVECERRCLGGPCNQTPGVVGRCYAAIPRYTYVPFPINSCVSFTYGGCEGNDNNFEDVNVCFNLCVFRRG.

The N-terminal stretch at 1–23 (MLASCHITSLSGILLLLCVQCSA) is a signal peptide. 2 consecutive BPTI/Kunitz inhibitor domains span residues 30 to 79 (CGDV…ERRC) and 84 to 136 (CNQT…FNLC). 6 disulfide bridges follow: Cys-30-Cys-79, Cys-40-Cys-62, Cys-54-Cys-75, Cys-84-Cys-136, Cys-94-Cys-119, and Cys-111-Cys-132.

As to expression, prismatic layer of shell (at protein level).

It is found in the secreted. The polypeptide is BPTI/Kunitz domain-containing protein 2 (Margaritifera margaritifera (Freshwater pearl mussel)).